We begin with the raw amino-acid sequence, 318 residues long: Energy-coupling factor transporter ATP-binding protein EcfA2 (318 aa).

One can recognise an ABC transporter domain in the interval 22-271 (LRAQGLKCVF…PEIMQTTSIA (250 aa)). 59–66 (GNSGSGKS) is a binding site for ATP.

The protein belongs to the ABC transporter superfamily. Energy-coupling factor EcfA family. In terms of assembly, forms a stable energy-coupling factor (ECF) transporter complex composed of 2 membrane-embedded substrate-binding proteins (S component), 2 ATP-binding proteins (A component) and 2 transmembrane proteins (T component).

The protein localises to the cell membrane. Its function is as follows. ATP-binding (A) component of a common energy-coupling factor (ECF) ABC-transporter complex. Unlike classic ABC transporters this ECF transporter provides the energy necessary to transport a number of different substrates. The chain is Energy-coupling factor transporter ATP-binding protein EcfA2 from Mycoplasmoides gallisepticum (strain R(low / passage 15 / clone 2)) (Mycoplasma gallisepticum).